The chain runs to 91 residues: Probable Fe(2+)-trafficking protein (91 aa).

It belongs to the Fe(2+)-trafficking protein family. In terms of assembly, monomer.

Functionally, could be a mediator in iron transactions between iron acquisition and iron-requiring processes, such as synthesis and/or repair of Fe-S clusters in biosynthetic enzymes. The polypeptide is Probable Fe(2+)-trafficking protein (Escherichia coli O7:K1 (strain IAI39 / ExPEC)).